The chain runs to 546 residues: CTP synthase (546 aa).

Positions 1-265 are amidoligase domain; sequence MTKYVFVTGG…DEIVCHKLNI (265 aa). Residue serine 13 participates in CTP binding. Serine 13 lines the UTP pocket. ATP contacts are provided by residues 14 to 19 and aspartate 71; that span reads SLGKGI. Positions 71 and 139 each coordinate Mg(2+). CTP contacts are provided by residues 146–148, 186–191, and lysine 222; these read DIE and KTKPTQ. Residues 186–191 and lysine 222 contribute to the UTP site; that span reads KTKPTQ. The region spanning 290–543 is the Glutamine amidotransferase type-1 domain; it reads KIAFVGKYVD…VKAALANQKA (254 aa). Glycine 351 lines the L-glutamine pocket. Cysteine 378 acts as the Nucleophile; for glutamine hydrolysis in catalysis. Residues 379-382, glutamate 402, and arginine 469 contribute to the L-glutamine site; that span reads LGMQ. Residues histidine 516 and glutamate 518 contribute to the active site.

It belongs to the CTP synthase family. In terms of assembly, homotetramer.

It carries out the reaction UTP + L-glutamine + ATP + H2O = CTP + L-glutamate + ADP + phosphate + 2 H(+). The catalysed reaction is L-glutamine + H2O = L-glutamate + NH4(+). It catalyses the reaction UTP + NH4(+) + ATP = CTP + ADP + phosphate + 2 H(+). The protein operates within pyrimidine metabolism; CTP biosynthesis via de novo pathway; CTP from UDP: step 2/2. With respect to regulation, allosterically activated by GTP, when glutamine is the substrate; GTP has no effect on the reaction when ammonia is the substrate. The allosteric effector GTP functions by stabilizing the protein conformation that binds the tetrahedral intermediate(s) formed during glutamine hydrolysis. Inhibited by the product CTP, via allosteric rather than competitive inhibition. Catalyzes the ATP-dependent amination of UTP to CTP with either L-glutamine or ammonia as the source of nitrogen. Regulates intracellular CTP levels through interactions with the four ribonucleotide triphosphates. The sequence is that of CTP synthase from Dechloromonas aromatica (strain RCB).